We begin with the raw amino-acid sequence, 490 residues long: tRNA-guanine(15) transglycosylase (490 aa).

Catalysis depends on aspartate 92, which acts as the Nucleophile. Positions 127 and 195 each coordinate substrate. Cysteine 278, cysteine 280, and cysteine 283 together coordinate Zn(2+).

This sequence belongs to the archaeosine tRNA-ribosyltransferase family. Zn(2+) is required as a cofactor.

The catalysed reaction is guanosine(15) in tRNA + 7-cyano-7-deazaguanine = 7-cyano-7-carbaguanosine(15) in tRNA + guanine. It participates in tRNA modification; archaeosine-tRNA biosynthesis. Exchanges the guanine residue with 7-cyano-7-deazaguanine (preQ0) at position 15 in the dihydrouridine loop (D-loop) of archaeal tRNAs. This Haloarcula marismortui (strain ATCC 43049 / DSM 3752 / JCM 8966 / VKM B-1809) (Halobacterium marismortui) protein is tRNA-guanine(15) transglycosylase.